The chain runs to 233 residues: Glycolipid transfer protein 3 (233 aa).

Residues D79, N83, W126, and H165 each contribute to the a ganglioside GM3 (d18:1(4E)) site.

It belongs to the GLTP family.

Its function is as follows. May be involved in glycolipids transfer. This is Glycolipid transfer protein 3 from Arabidopsis thaliana (Mouse-ear cress).